A 320-amino-acid chain; its full sequence is Lactamase-like protein GME11357 (320 aa).

Zn(2+)-binding residues include His-106, His-108, Asp-110, and His-111. Catalysis depends on Asp-110, which acts as the Proton donor/acceptor.

This sequence belongs to the metallo-beta-lactamase superfamily. Requires Zn(2+) as cofactor.

It functions in the pathway secondary metabolite biosynthesis. Its function is as follows. Lactamase-like protein; part of the gene cluster that mediates the biosynthesis of dibenzodioxocinones such as pestalotiollide B, a novel class of inhibitors against cholesterol ester transfer protein (CEPT). The biosynthesis initiates from condensation of acetate and malonate units catalyzed by the non-reducing PKS pks8/GME11356. Pks8/GME11356 lacks a thioesterase (TE) domain, which is important to the cyclizing of the third ring of atrochrysone carboxylic acid, and the esterase GME11355 might play the role of TE and catalyzes the cyclization reaction of the C ring. The lactamase-like protein GME11357 (or other beta-lactamases in Pestalotiopsis microspora) probably hydrolyzes the thioester bond between the ACP of pks8/GME11356 and the intermediate to release atrochrysone carboxylic acid, which is spontaneously dehydrates to form endocrocin anthrone. Endocrocin anthrone is further converted to emodin via the endocrocin intermediate. Emodin is then oxidized by several enzymes such as the Baeyer-Villiger oxidase GME11358, the oxidoreductase GME11367, the short chain dehydrogenase/reductase GME11373, as well as by other oxidoreductases from the cluster, to modify the A and C rings and open the B ring, and finally yield monodictyphenone. The prenyltransferase GME11375 may catalyze the addition reaction between the C5 side chains and the carbon bone of dibenzodioxocinones. The remaining biochemical reactions to the final product dibenzodioxocinones should be methylation catalyzed by methyltransferase GME11366 and reduction and lactonization reaction catalyzed by a series of oxidordeuctases. The polypeptide is Lactamase-like protein GME11357 (Pestalotiopsis microspora).